We begin with the raw amino-acid sequence, 48 residues long: Glycine-rich RNA-binding protein 2 (48 aa).

The polypeptide is Glycine-rich RNA-binding protein 2 (Populus euphratica (Euphrates poplar)).